Here is a 141-residue protein sequence, read N- to C-terminus: VLSSADKTNIKAAWDKVGGNAGEYGAEALERMFLSFPTTKTYFPHFDLSHGSAQVKGHGKKVGDALTNAVGHLDDLPGALSALSDLHAYKLRVDPVNFKLLSHCLLVTLANHLPSDFTPAVHASLDKFLASVSTVLTSKYR.

The Globin domain maps to 1-141 (VLSSADKTNI…VSTVLTSKYR (141 aa)). S3 is subject to Phosphoserine. K7 carries the N6-succinyllysine modification. Phosphothreonine is present on T8. K11 is subject to N6-succinyllysine. Residue K16 is modified to N6-acetyllysine; alternate. K16 is modified (N6-succinyllysine; alternate). Position 24 is a phosphotyrosine (Y24). S35 is subject to Phosphoserine. K40 carries the post-translational modification N6-succinyllysine. The residue at position 49 (S49) is a Phosphoserine. H58 lines the O2 pocket. Residue H87 participates in heme b binding. S102 is modified (phosphoserine). At T108 the chain carries Phosphothreonine. Residues S124 and S131 each carry the phosphoserine modification. 2 positions are modified to phosphothreonine: T134 and T137. A Phosphoserine modification is found at S138.

This sequence belongs to the globin family. Heterotetramer of two alpha chains and two beta chains. Red blood cells.

Involved in oxygen transport from the lung to the various peripheral tissues. Its function is as follows. Hemopressin acts as an antagonist peptide of the cannabinoid receptor CNR1. Hemopressin-binding efficiently blocks cannabinoid receptor CNR1 and subsequent signaling. In Rousettus aegyptiacus (Egyptian fruit bat), this protein is Hemoglobin subunit alpha (HBA).